The sequence spans 198 residues: MSNSAVSYKPIVNIENIVATVTLEQSLDLYAMERSIPNIEYDPDQFPGLIFRLEQPKVTALIFKSGKMVVTGAKSTEELIKAVKRIIKTLKKYGIKIMGKPKIQIQNIVASANLHVNVNLDKAAFLLENNMYEPEQFPGLIFRMDDPRVVLLIFSSGKMVITGAKREDEVSKAVKRIFDKLAELDCVKPIEEEEELEL.

2 consecutive repeat copies span residues 14 to 90 and 105 to 181.

The protein belongs to the TBP family.

Its function is as follows. General factor that plays a role in the activation of archaeal genes transcribed by RNA polymerase. Binds specifically to the TATA box promoter element which lies close to the position of transcription initiation. This Saccharolobus shibatae (strain ATCC 51178 / DSM 5389 / JCM 8931 / NBRC 15437 / B12) (Sulfolobus shibatae) protein is TATA-box-binding protein.